A 174-amino-acid polypeptide reads, in one-letter code: 3-hydroxydecanoyl-[acyl-carrier-protein] dehydratase (174 aa).

His71 is a catalytic residue.

Belongs to the thioester dehydratase family. FabA subfamily. Homodimer.

It localises to the cytoplasm. The enzyme catalyses a (3R)-hydroxyacyl-[ACP] = a (2E)-enoyl-[ACP] + H2O. It carries out the reaction (3R)-hydroxydecanoyl-[ACP] = (2E)-decenoyl-[ACP] + H2O. The catalysed reaction is (2E)-decenoyl-[ACP] = (3Z)-decenoyl-[ACP]. The protein operates within lipid metabolism; fatty acid biosynthesis. Functionally, necessary for the introduction of cis unsaturation into fatty acids. Catalyzes the dehydration of (3R)-3-hydroxydecanoyl-ACP to E-(2)-decenoyl-ACP and then its isomerization to Z-(3)-decenoyl-ACP. Can catalyze the dehydratase reaction for beta-hydroxyacyl-ACPs with saturated chain lengths up to 16:0, being most active on intermediate chain length. The polypeptide is 3-hydroxydecanoyl-[acyl-carrier-protein] dehydratase (Nitrobacter winogradskyi (strain ATCC 25391 / DSM 10237 / CIP 104748 / NCIMB 11846 / Nb-255)).